The following is a 618-amino-acid chain: UvrABC system protein C (618 aa).

Residues 13-92 enclose the GIY-YIG domain; it reads DKPGVYLMKN…IKKYRPKYNI (80 aa). Residues 204–239 form the UVR domain; the sequence is LDIVENFKLNMEKAAENLEFEKAAMLRDKINIIEKI.

It belongs to the UvrC family. In terms of assembly, interacts with UvrB in an incision complex.

The protein resides in the cytoplasm. Functionally, the UvrABC repair system catalyzes the recognition and processing of DNA lesions. UvrC both incises the 5' and 3' sides of the lesion. The N-terminal half is responsible for the 3' incision and the C-terminal half is responsible for the 5' incision. The chain is UvrABC system protein C from Clostridium botulinum (strain Okra / Type B1).